Consider the following 234-residue polypeptide: Small ribosomal subunit protein uS3 (234 aa).

A KH type-2 domain is found at 39 to 107; it reads IRKYVKKELY…EIAVNIKEER (69 aa). The span at 213-222 shows a compositional bias: basic and acidic residues; that stretch reads PTEKAEETTS. Residues 213–234 are disordered; it reads PTEKAEETTSKPKRRPAKKRGK. The span at 223–234 shows a compositional bias: basic residues; sequence KPKRRPAKKRGK.

It belongs to the universal ribosomal protein uS3 family. As to quaternary structure, part of the 30S ribosomal subunit. Forms a tight complex with proteins S10 and S14.

Functionally, binds the lower part of the 30S subunit head. Binds mRNA in the 70S ribosome, positioning it for translation. This is Small ribosomal subunit protein uS3 from Aliarcobacter butzleri (strain RM4018) (Arcobacter butzleri).